The sequence spans 154 residues: PTS system glucose-specific EIIA component (154 aa).

The PTS EIIA type-1 domain maps to 26 to 130; it reads DEVFKERMLG…SIKSPIIFTN (105 aa). 2 residues coordinate Zn(2+): H63 and H78. H78 serves as the catalytic Tele-phosphohistidine intermediate; for EIIA activity. Residue H78 is modified to Phosphohistidine; by HPr.

As to quaternary structure, heterodimer with glycerol kinase (glpk). Zn(2+) is required as a cofactor.

The protein localises to the cytoplasm. The phosphoenolpyruvate-dependent sugar phosphotransferase system (sugar PTS), a major carbohydrate active transport system, catalyzes the phosphorylation of incoming sugar substrates concomitantly with their translocation across the cell membrane. The enzyme II complex composed of PtsG and Crr is involved in glucose transport. This chain is PTS system glucose-specific EIIA component (crr), found in Mycoplasma capricolum subsp. capricolum (strain California kid / ATCC 27343 / NCTC 10154).